The sequence spans 143 residues: Large ribosomal subunit protein uL11 (143 aa).

It belongs to the universal ribosomal protein uL11 family. As to quaternary structure, part of the ribosomal stalk of the 50S ribosomal subunit. Interacts with L10 and the large rRNA to form the base of the stalk. L10 forms an elongated spine to which L12 dimers bind in a sequential fashion forming a multimeric L10(L12)X complex. One or more lysine residues are methylated.

Its function is as follows. Forms part of the ribosomal stalk which helps the ribosome interact with GTP-bound translation factors. This is Large ribosomal subunit protein uL11 from Rhizobium etli (strain CIAT 652).